The sequence spans 140 residues: Gonadotropin subunit beta-2 (140 aa).

Positions 1–23 (MSVPASSFLLLCFLMNSFSPAQS) are cleaved as a signal peptide. 6 disulfides stabilise this stretch: cysteine 29–cysteine 77, cysteine 43–cysteine 92, cysteine 46–cysteine 130, cysteine 54–cysteine 108, cysteine 58–cysteine 110, and cysteine 113–cysteine 120. Asparagine 33 is a glycosylation site (N-linked (GlcNAc...) asparagine).

The protein belongs to the glycoprotein hormones subunit beta family. In terms of assembly, heterodimer of an alpha and a beta chain.

The protein localises to the secreted. Involved in gametogenesis and steroidogenesis. In Ictalurus punctatus (Channel catfish), this protein is Gonadotropin subunit beta-2 (cgbb).